Consider the following 98-residue polypeptide: Nuclear protein 2 (98 aa).

Positions 1–11 are enriched in low complexity; that stretch reads MEPAAPTVQPR. 2 disordered regions span residues 1 to 24 and 78 to 98; these read MEPA…PPVG and LNSQ…TRLT. Residues 81–98 show a composition bias toward basic residues; it reads QRKRRQRQLQPRPRTRLT.

The protein belongs to the NUPR family.

It is found in the nucleus. In terms of biological role, acts as a transcriptional repressor by inhibiting gene expression at the NUPR1 promoter in a p53/TP53-dependent manner in cancer cells. Involved in the G1 cell cycle arrest, and in a decrease in cell viability and cell proliferation. Plays a role as a negative regulator of the protumoral factor NUPR1. The chain is Nuclear protein 2 from Bos taurus (Bovine).